Here is a 109-residue protein sequence, read N- to C-terminus: Cell division protein ZapA (109 aa).

Residues glutamate 22–arginine 99 are a coiled coil.

The protein belongs to the ZapA family. Type 1 subfamily. As to quaternary structure, homodimer. Interacts with FtsZ.

The protein localises to the cytoplasm. Its function is as follows. Activator of cell division through the inhibition of FtsZ GTPase activity, therefore promoting FtsZ assembly into bundles of protofilaments necessary for the formation of the division Z ring. It is recruited early at mid-cell but it is not essential for cell division. The protein is Cell division protein ZapA of Yersinia enterocolitica serotype O:8 / biotype 1B (strain NCTC 13174 / 8081).